The following is a 167-amino-acid chain: Kininogen-1 (167 aa).

An N-terminal signal peptide occupies residues 1–23 (MRLWFCLSFFIILCLEHFPGTLA).

Belongs to the bradykinin-related peptide family. In terms of tissue distribution, expressed by the skin glands.

It is found in the secreted. Its function is as follows. Vasodilator. Bradykinin produces in vitro relaxation of rat arterial smooth muscle and constriction of intestinal smooth muscle. May target bradykinin receptors (BDKRB). This is Kininogen-1 from Bombina orientalis (Oriental fire-bellied toad).